A 131-amino-acid chain; its full sequence is Ribosome-binding factor A (131 aa).

It belongs to the RbfA family. In terms of assembly, monomer. Binds 30S ribosomal subunits, but not 50S ribosomal subunits or 70S ribosomes.

It localises to the cytoplasm. In terms of biological role, one of several proteins that assist in the late maturation steps of the functional core of the 30S ribosomal subunit. Associates with free 30S ribosomal subunits (but not with 30S subunits that are part of 70S ribosomes or polysomes). Required for efficient processing of 16S rRNA. May interact with the 5'-terminal helix region of 16S rRNA. In Protochlamydia amoebophila (strain UWE25), this protein is Ribosome-binding factor A.